The sequence spans 340 residues: MILSIESSCDDSSLALTRIKDAKLIAHFKISQEKHHSSYGGVVPELASRLHAENLPLLLERIKISLNKDFSKIKAIAITNQPGLSVTLIEGLMMAKALSLSLNLPLILEDHLRGHVYSLFINEKQTCMPLSALLVSGGHSLILEARDYEDIKIVATSLDDSFGESFDKVSKMLDLGYPGGPIVEKLALDYAHQNEPLMFPIPLKNSQNLAFSFSGLKNAVRLEVEKNAPNLNEAIKQKISYHFQSAAIEHLIQQTKRYFKIKRPKIFGIVGGASQNLALRKAFENLCDEFDCKLVLAPLEFCNDNAAMIGRSSLEAYQQKRFVPLEKANISPRTLLKSFE.

Residues histidine 111 and histidine 115 each coordinate Fe cation. Residues 134–138 (LVSGG), aspartate 167, glycine 180, and asparagine 276 each bind substrate. Aspartate 304 is a Fe cation binding site.

The protein belongs to the KAE1 / TsaD family. Requires Fe(2+) as cofactor.

Its subcellular location is the cytoplasm. The enzyme catalyses L-threonylcarbamoyladenylate + adenosine(37) in tRNA = N(6)-L-threonylcarbamoyladenosine(37) in tRNA + AMP + H(+). Required for the formation of a threonylcarbamoyl group on adenosine at position 37 (t(6)A37) in tRNAs that read codons beginning with adenine. Is involved in the transfer of the threonylcarbamoyl moiety of threonylcarbamoyl-AMP (TC-AMP) to the N6 group of A37, together with TsaE and TsaB. TsaD likely plays a direct catalytic role in this reaction. The polypeptide is tRNA N6-adenosine threonylcarbamoyltransferase (Helicobacter pylori (strain Shi470)).